A 197-amino-acid chain; its full sequence is Rac-like GTP-binding protein ARAC6 (197 aa).

13 to 20 is a GTP binding site; that stretch reads GDGAVGKT. The Effector region motif lies at 35-43; that stretch reads YVPTVFDNF. GTP contacts are provided by residues 60-64 and 118-121; these read DTAGQ and TKLD. S160 lines the GDP pocket. A Cysteine methyl ester modification is found at C194. C194 is lipidated: S-geranylgeranyl cysteine. A propeptide spans 195–197 (removed in mature form); that stretch reads SIL.

The protein belongs to the small GTPase superfamily. Rho family. In terms of assembly, interacts with SPK1. Ubiquitous. Preferentially expressed in mature pollen and pollen tubes.

Its subcellular location is the cytoplasm. It localises to the membrane. Its function is as follows. May be involved in cell polarity control during the actin-dependent tip growth of pollen tubes. Functionally, inactive GDP-bound Rho GTPases reside in the cytosol, are found in a complex with Rho GDP-dissociation inhibitors (Rho GDIs), and are released from the GDI protein in order to translocate to membranes upon activation. The protein is Rac-like GTP-binding protein ARAC6 (ARAC6) of Arabidopsis thaliana (Mouse-ear cress).